The sequence spans 395 residues: Tyrosine--tRNA ligase 2 (395 aa).

A 'HIGH' region motif is present at residues 42-51; it reads PTAPDIHLGH. The 'KMSKS' region motif lies at 226-230; it reads KMSKS. Lys-229 lines the ATP pocket. Residues 334–394 enclose the S4 RNA-binding domain; the sequence is IAISNLLKEA…GKRKFARVTI (61 aa).

The protein belongs to the class-I aminoacyl-tRNA synthetase family. TyrS type 2 subfamily. Homodimer.

Its subcellular location is the cytoplasm. The catalysed reaction is tRNA(Tyr) + L-tyrosine + ATP = L-tyrosyl-tRNA(Tyr) + AMP + diphosphate + H(+). Its function is as follows. Catalyzes the attachment of tyrosine to tRNA(Tyr) in a two-step reaction: tyrosine is first activated by ATP to form Tyr-AMP and then transferred to the acceptor end of tRNA(Tyr). The polypeptide is Tyrosine--tRNA ligase 2 (Vibrio cholerae serotype O1 (strain ATCC 39315 / El Tor Inaba N16961)).